The following is a 517-amino-acid chain: Ubiquitin carboxyl-terminal hydrolase 30 (517 aa).

Residues 1-35 are Mitochondrial intermembrane-facing; sequence MLSSRAQAARTAADKALQRFLRTGAAVRYKVMKNW. Residues 36 to 56 traverse the membrane as a helical segment; sequence GVIGGIAAALAAGIYVIWGPI. Residues 57–517 are Cytoplasmic-facing; that stretch reads TERKKRRKGL…QQGREYRSEE (461 aa). The 435-residue stretch at 68–502 folds into the USP domain; it reads PGLVNLGNTC…SAYLLFYERV (435 aa). The active-site Nucleophile is Cys-77. Residues 198 to 221 are disordered; the sequence is MAPRQVTCHTRGSPHPTTNHWKSQ. Over residues 204–218 the composition is skewed to polar residues; it reads TCHTRGSPHPTTNHW. Residues Lys-235 and Lys-289 each participate in a glycyl lysine isopeptide (Lys-Gly) (interchain with G-Cter in ubiquitin) cross-link. The disordered stretch occupies residues 364–395; sequence SQHGPKATENPGSAPEVQDAQAAPKPGLSQPG. His-452 (proton acceptor) is an active-site residue.

Belongs to the peptidase C19 family. Post-translationally, ubiquitinated by parkin (PRKN) at Lys-235 and Lys-289, leading to its degradation.

Its subcellular location is the mitochondrion outer membrane. It catalyses the reaction Thiol-dependent hydrolysis of ester, thioester, amide, peptide and isopeptide bonds formed by the C-terminal Gly of ubiquitin (a 76-residue protein attached to proteins as an intracellular targeting signal).. With respect to regulation, inhibited by the diterpenoid derivative 15-oxospiramilactone (S3). Its function is as follows. Deubiquitinating enzyme tethered to the mitochondrial outer membrane that acts as a key inhibitor of mitophagy by counteracting the action of parkin (PRKN): hydrolyzes ubiquitin attached by parkin on target proteins, such as RHOT1/MIRO1 and TOMM20, thereby blocking parkin's ability to drive mitophagy. Preferentially cleaves 'Lys-6'- and 'Lys-11'-linked polyubiquitin chains, 2 types of linkage that participate in mitophagic signaling. Does not cleave efficiently polyubiquitin phosphorylated at 'Ser-65'. Acts as negative regulator of mitochondrial fusion by mediating deubiquitination of MFN1 and MFN2. The chain is Ubiquitin carboxyl-terminal hydrolase 30 (Usp30) from Mus musculus (Mouse).